The chain runs to 379 residues: MEQRDYYELLEVSRNASDAEIKKAYRRLAMKYHPDRNPGDTSAEEKFKEIQKAYNILSDKQKRAAYDQFGHAGVDPSMGGGPGGFGGFGGFGDVFEDIFENIFSGGRGQGRQSRGQRGADLQFNVQLTLEEAAIGKEVEITVPRHGTCTVCEGSGAKKGTSPKTCETCQGMGQVRIQQGFFSIQQTCPTCHGEGKIISDPCASCHGQGRVRESKKINVKIPAGVDNGDRVRLSGEGEAGVHGGGSGDLYVQISLKKHAIFERHENDLHCEVPISFATAALGGSIEVPTLEGRVTLKIPAETQTGKVFRLRSKGMKSVRGYGQGDLLCKVVVETPVNLSREQKELLNKLQDSLENAKGTHSPKTSSWFAGVKKFFEDMKF.

The 66-residue stretch at 5–70 (DYYELLEVSR…QKRAAYDQFG (66 aa)) folds into the J domain. A CR-type zinc finger spans residues 135 to 213 (GKEVEITVPR…CHGQGRVRES (79 aa)). The Zn(2+) site is built by C148, C151, C165, C168, C187, C190, C201, and C204. 4 CXXCXGXG motif repeats span residues 148–155 (CTVCEGSG), 165–172 (CETCQGMG), 187–194 (CPTCHGEG), and 201–208 (CASCHGQG).

It belongs to the DnaJ family. In terms of assembly, homodimer. Zn(2+) serves as cofactor.

It localises to the cytoplasm. Its function is as follows. Participates actively in the response to hyperosmotic and heat shock by preventing the aggregation of stress-denatured proteins and by disaggregating proteins, also in an autonomous, DnaK-independent fashion. Unfolded proteins bind initially to DnaJ; upon interaction with the DnaJ-bound protein, DnaK hydrolyzes its bound ATP, resulting in the formation of a stable complex. GrpE releases ADP from DnaK; ATP binding to DnaK triggers the release of the substrate protein, thus completing the reaction cycle. Several rounds of ATP-dependent interactions between DnaJ, DnaK and GrpE are required for fully efficient folding. Also involved, together with DnaK and GrpE, in the DNA replication of plasmids through activation of initiation proteins. This Legionella pneumophila (strain Lens) protein is Chaperone protein DnaJ.